Here is a 716-residue protein sequence, read N- to C-terminus: VERDPIKTSFEKWAKPGHFSKTLSKGPNTTTWIWNLHADAHDFDSHTDDLEEISRKVFSAHFGQLAIILIWLSGMYFHGARFSNYEAWLSDPTHIKPSAQVVWPIVGQEILNGDVGGGFRGIQITSGFFQLWRASGITSELQLYCTAIGGLIFAGLMLFAGWFHYHKAAPKLAWFQDVESMLNHHLAGLLGLGSLSWAGHQVHVSLPINQLLDAGVDPKEIPLPHEFILNRDLLAQLYPSFAKGLTPFFTLNWSEYSDFLTFRGGLNPVTGGLWLTDTVHHHLAIAILFLIAGHMYRTNWSIGHSLKEILEAHKGPFTGEGHKGLYEILTTSWHAQLALNLAMLGSLTIVVAHHMYSMPPYPYLAIDYGTQLSLFTHHMWIGGFLIVGAAAHAAIFMVRDYDPTTQYNNLLDRVLRHRDAIISHLNWVCIFLGFHSFGLYIHNDTMSALGRPQDMFSDTAIQLQPIFAQWIQNTHASAPSLTAPDATASTSLTWGGGDLVAVGNKVALLPIPLGTADFLVHHIHAFTIHVTVLILLKGVLFARSSRLIPDKANLGFRFPCDGPGRGGTCQVSAWDHVFLGLFWMYNAISVVIFHFSWKMQSDVWGSISDQGVVTHITGGNFAQSSITINGWLRDFLWAQASQVIQSYGSSLSAYGLLFLGAHFVWAFSLMFLFSGRGYWQELIESIVWAHNKLKVAPAIQPRALSIVQGRAVGVAH.

The next 8 membrane-spanning stretches (helical) occupy residues Val-57 to Ala-80, Leu-143 to His-166, Leu-182 to Leu-206, Thr-278 to Tyr-296, Trp-333 to Tyr-356, Leu-372 to Val-398, Ala-420 to His-442, and Phe-518 to Leu-536. Residues Cys-560 and Cys-569 each coordinate [4Fe-4S] cluster. Transmembrane regions (helical) follow at residues His-576–Trp-597 and Leu-651–Phe-673. Chlorophyll a' is bound at residue His-662. The chlorophyll a site is built by Met-670 and Tyr-678. Residue Trp-679 participates in phylloquinone binding. Residues Ala-711–His-716 form a helical membrane-spanning segment.

The protein belongs to the PsaA/PsaB family. In terms of assembly, the PsaA/B heterodimer binds the P700 chlorophyll special pair and subsequent electron acceptors. PSI consists of a core antenna complex that captures photons, and an electron transfer chain that converts photonic excitation into a charge separation. The eukaryotic PSI reaction center is composed of at least 11 subunits. It depends on P700 is a chlorophyll a/chlorophyll a' dimer, A0 is one or more chlorophyll a, A1 is one or both phylloquinones and FX is a shared 4Fe-4S iron-sulfur center. as a cofactor.

It localises to the plastid. It is found in the chloroplast thylakoid membrane. It catalyses the reaction reduced [plastocyanin] + hnu + oxidized [2Fe-2S]-[ferredoxin] = oxidized [plastocyanin] + reduced [2Fe-2S]-[ferredoxin]. In terms of biological role, psaA and PsaB bind P700, the primary electron donor of photosystem I (PSI), as well as the electron acceptors A0, A1 and FX. PSI is a plastocyanin-ferredoxin oxidoreductase, converting photonic excitation into a charge separation, which transfers an electron from the donor P700 chlorophyll pair to the spectroscopically characterized acceptors A0, A1, FX, FA and FB in turn. Oxidized P700 is reduced on the lumenal side of the thylakoid membrane by plastocyanin. This is Photosystem I P700 chlorophyll a apoprotein A1 from Araucaria araucana (Monkey-puzzle tree).